The chain runs to 232 residues: Imidazole glycerol phosphate synthase subunit HisF (232 aa).

Active-site residues include Asp-11 and Asp-130.

Belongs to the HisA/HisF family. Heterodimer of HisH and HisF.

It is found in the cytoplasm. It catalyses the reaction 5-[(5-phospho-1-deoxy-D-ribulos-1-ylimino)methylamino]-1-(5-phospho-beta-D-ribosyl)imidazole-4-carboxamide + L-glutamine = D-erythro-1-(imidazol-4-yl)glycerol 3-phosphate + 5-amino-1-(5-phospho-beta-D-ribosyl)imidazole-4-carboxamide + L-glutamate + H(+). It functions in the pathway amino-acid biosynthesis; L-histidine biosynthesis; L-histidine from 5-phospho-alpha-D-ribose 1-diphosphate: step 5/9. Its function is as follows. IGPS catalyzes the conversion of PRFAR and glutamine to IGP, AICAR and glutamate. The HisF subunit catalyzes the cyclization activity that produces IGP and AICAR from PRFAR using the ammonia provided by the HisH subunit. This Listeria monocytogenes serotype 4a (strain HCC23) protein is Imidazole glycerol phosphate synthase subunit HisF.